The following is a 391-amino-acid chain: Cyclin-A1 (391 aa).

The protein belongs to the cyclin family. Cyclin AB subfamily. In terms of assembly, interacts with the CDK1 and the CDK2 protein kinases to form a serine/threonine kinase holoenzyme complex. The cyclin subunit imparts substrate specificity to the complex.

Its subcellular location is the nucleus. Its function is as follows. May be involved in the control of the cell cycle at the G1/S (start) and G2/M (mitosis) transitions. The sequence is that of Cyclin-A1 (ccna1) from Carassius auratus (Goldfish).